The chain runs to 141 residues: Large ribosomal subunit protein uL11 (141 aa).

It belongs to the universal ribosomal protein uL11 family. In terms of assembly, part of the ribosomal stalk of the 50S ribosomal subunit. Interacts with L10 and the large rRNA to form the base of the stalk. L10 forms an elongated spine to which L12 dimers bind in a sequential fashion forming a multimeric L10(L12)X complex. Post-translationally, one or more lysine residues are methylated.

Forms part of the ribosomal stalk which helps the ribosome interact with GTP-bound translation factors. In Chlorobium chlorochromatii (strain CaD3), this protein is Large ribosomal subunit protein uL11.